A 188-amino-acid chain; its full sequence is Dual specificity protein phosphatase 18 (188 aa).

Positions Gly19–Gly160 constitute a Tyrosine-protein phosphatase domain. The active-site Phosphocysteine intermediate is Cys104.

It belongs to the protein-tyrosine phosphatase family. Non-receptor class dual specificity subfamily. As to expression, widely expressed with highest levels in liver, brain, ovary and testis.

The protein resides in the cytoplasm. It is found in the nucleus. The protein localises to the mitochondrion inner membrane. The enzyme catalyses O-phospho-L-tyrosyl-[protein] + H2O = L-tyrosyl-[protein] + phosphate. It carries out the reaction O-phospho-L-seryl-[protein] + H2O = L-seryl-[protein] + phosphate. It catalyses the reaction O-phospho-L-threonyl-[protein] + H2O = L-threonyl-[protein] + phosphate. With respect to regulation, activated by manganese ions, inhibited by iodoacetic acid. Functionally, can dephosphorylate single and diphosphorylated synthetic MAPK peptides, with preference for the phosphotyrosine and diphosphorylated forms over phosphothreonine. In vitro, dephosphorylates p-nitrophenyl phosphate (pNPP). The protein is Dual specificity protein phosphatase 18 (DUSP18) of Homo sapiens (Human).